Here is a 287-residue protein sequence, read N- to C-terminus: Protease HtpX (287 aa).

A run of 2 helical transmembrane segments spans residues 4 to 24 and 33 to 53; these read IFLL…VMSI and GGLL…SLAI. His-139 lines the Zn(2+) pocket. The active site involves Glu-140. Residue His-143 participates in Zn(2+) binding. Transmembrane regions (helical) follow at residues 154–174 and 195–215; these read LIQG…AGII and AVVF…VAYF. Glu-220 is a Zn(2+) binding site.

The protein belongs to the peptidase M48B family. Zn(2+) serves as cofactor.

It localises to the cell inner membrane. The polypeptide is Protease HtpX (Shewanella frigidimarina (strain NCIMB 400)).